A 277-amino-acid chain; its full sequence is Bis(5'-nucleosyl)-tetraphosphatase, symmetrical (277 aa).

Belongs to the Ap4A hydrolase family.

It carries out the reaction P(1),P(4)-bis(5'-adenosyl) tetraphosphate + H2O = 2 ADP + 2 H(+). Its function is as follows. Hydrolyzes diadenosine 5',5'''-P1,P4-tetraphosphate to yield ADP. The protein is Bis(5'-nucleosyl)-tetraphosphatase, symmetrical of Bordetella bronchiseptica (strain ATCC BAA-588 / NCTC 13252 / RB50) (Alcaligenes bronchisepticus).